The following is a 317-amino-acid chain: Transmembrane and death domain protein 1 (317 aa).

Residues 1–27 form the signal peptide; that stretch reads MAARTLASALVLTLWVWALAPAGAVDA. Residues 28 to 218 are Extracellular-facing; that stretch reads MGPHAAVRLA…ERSPMGWAGP (191 aa). A compositionally biased stretch (basic and acidic residues) spans 62-73; sequence ELSRLSEDRLAR. The segment at 62–106 is disordered; sequence ELSRLSEDRLARPEPLNTTSGSPSRRRRREAAEDPAGRVAGPGEV. Residues 66 to 150 form the Death domain; it reads LSEDRLARPE…DVARELGKNL (85 aa). N-linked (GlcNAc...) asparagine glycosylation occurs at Asn78. A helical transmembrane segment spans residues 219–239; sequence LALGLLTGFVGALGTGALVVL. At 240–317 the chain is on the cytoplasmic side; that stretch reads LTLWITGGDG…SWGSGALDGL (78 aa).

It localises to the membrane. The polypeptide is Transmembrane and death domain protein 1 (Homo sapiens (Human)).